Reading from the N-terminus, the 117-residue chain is Iron-sulfur cluster insertion protein ErpA (117 aa).

Iron-sulfur cluster-binding residues include Cys-45, Cys-109, and Cys-111.

Belongs to the HesB/IscA family. As to quaternary structure, homodimer. Iron-sulfur cluster serves as cofactor.

Functionally, required for insertion of 4Fe-4S clusters for at least IspG. The chain is Iron-sulfur cluster insertion protein ErpA from Saccharophagus degradans (strain 2-40 / ATCC 43961 / DSM 17024).